Consider the following 1255-residue polypeptide: ATP-binding cassette sub-family B member 5 (1255 aa).

Residues 46–66 form a helical membrane-spanning segment; the sequence is IVLMTLGILASMINGATVPLM. The 301-residue stretch at 51–351 folds into the ABC transmembrane type-1 1 domain; that stretch reads LGILASMING…SVAPHLETFT (301 aa). N-linked (GlcNAc...) asparagine glycosylation is found at Asn-86 and Asn-92. A helical membrane pass occupies residues 104-124; sequence IIVLTLYYIGIGAAALIFGYV. A glycan (N-linked (GlcNAc...) asparagine) is linked at Asn-189. Transmembrane regions (helical) follow at residues 290 to 310 and 314 to 334; these read LSLGAVYFFMNGAYGLAFWYG and IFGGEPGYTIGTILAVFFSVI. N-linked (GlcNAc...) asparagine glycosylation is found at Asn-372 and Asn-391. The 237-residue stretch at 387–623 folds into the ABC transporter 1 domain; it reads IEFKNVSFSY…QGLYYSLAMA (237 aa). 422-429 is a binding site for ATP; that stretch reads GPSGSGKS. A glycan (N-linked (GlcNAc...) asparagine) is linked at Asn-643. Helical transmembrane passes span 694–714 and 738–758; these read VLGTLASALNGSVHPVFSIIF and MMLVVLGIVALVTYLMQGLFY. An ABC transmembrane type-1 2 domain is found at 694 to 981; sequence VLGTLASALN…TLVWAPEYSK (288 aa). Asn-790 carries N-linked (GlcNAc...) asparagine glycosylation. Helical transmembrane passes span 814 to 836, 841 to 863, and 955 to 975; these read LGIVTQDVSNMSLSILISFIYGW, LILSFAPVLAVTGMIQTAAMAGF, and MFIVFTAIAYGAMAIGETLVW. One can recognise an ABC transporter 2 domain in the interval 1016 to 1254; it reads LEFREVSFVY…GDTYFKLVAA (239 aa). Residue Asn-1036 is glycosylated (N-linked (GlcNAc...) asparagine). An ATP-binding site is contributed by 1051–1058; that stretch reads GSSGCGKS. N-linked (GlcNAc...) asparagine glycans are attached at residues Asn-1105, Asn-1189, and Asn-1229.

The protein belongs to the ABC transporter superfamily. ABCB family. Multidrug resistance exporter (TC 3.A.1.201) subfamily. In developing eye, expressed in basal limbal epithelium but not in central cornea. Acts as a marker of limbal stem cells.

It is found in the cell membrane. It catalyses the reaction daunorubicin(in) + ATP + H2O = daunorubicin(out) + ADP + phosphate + H(+). Its function is as follows. Energy-dependent efflux transporter responsible for decreased drug accumulation in multidrug-resistant cells. Specifically present in limbal stem cells, where it plays a key role in corneal development and repair. In Mus musculus (Mouse), this protein is ATP-binding cassette sub-family B member 5.